Reading from the N-terminus, the 140-residue chain is Chromatin accessibility complex 16kD protein (140 aa).

The segment at 111-140 is disordered; that stretch reads LNRSAGSDDDDDDDDDDDEEESESESESDE. Residues 117–140 show a composition bias toward acidic residues; it reads SDDDDDDDDDDDEEESESESESDE.

As to quaternary structure, component of the chromatin accessibility complex (CHRAC), composed of Chrac-14, Chrac-16, Acf and Iswi. Forms a heterodimer with Chrac-14. The Chrac-14/Chrac-16 heterodimer interacts with Acf (via N-terminus). Stabilizes the interaction between Chrac-14 and Iswi.

It is found in the nucleus. Its function is as follows. Histone-like protein which promotes nucleosome sliding of ATP-dependent nucleosome remodeling complexes. Part of the chromatin-accessibility complex (CHRAC) which uses energy/ATP to increase the general accessibility of DNA in chromatin. As a heterodimer with Chrac-14, binds DNA and facilitates nucleosome sliding by Acf. As part of the CHRAC complex, required for oogenesis. This chain is Chromatin accessibility complex 16kD protein, found in Drosophila melanogaster (Fruit fly).